Consider the following 158-residue polypeptide: MSSEFTHINADGNAHMVDVTEKAVTEREARAEAFIEMAPETLEMIMSGSHHKGDVFATARIAGIQAAKKTSDLIPLCHPLMLTKVEVDLEAQPAHHRVRITSLCKLSGKTGVEMEALTAASVAALTIYDMCKAVQKDMVISQTRLLEKRGGKSGHFKV.

Substrate-binding positions include 76-78 and 114-115; these read LCH and ME. Aspartate 129 is an active-site residue.

It belongs to the MoaC family. Homohexamer; trimer of dimers.

It catalyses the reaction (8S)-3',8-cyclo-7,8-dihydroguanosine 5'-triphosphate = cyclic pyranopterin phosphate + diphosphate. It participates in cofactor biosynthesis; molybdopterin biosynthesis. Its function is as follows. Catalyzes the conversion of (8S)-3',8-cyclo-7,8-dihydroguanosine 5'-triphosphate to cyclic pyranopterin monophosphate (cPMP). The chain is Cyclic pyranopterin monophosphate synthase from Shewanella loihica (strain ATCC BAA-1088 / PV-4).